The chain runs to 123 residues: Small ribosomal subunit protein uS13 (123 aa).

The protein belongs to the universal ribosomal protein uS13 family. As to quaternary structure, part of the 30S ribosomal subunit. Forms a loose heterodimer with protein S19. Forms two bridges to the 50S subunit in the 70S ribosome.

Located at the top of the head of the 30S subunit, it contacts several helices of the 16S rRNA. In the 70S ribosome it contacts the 23S rRNA (bridge B1a) and protein L5 of the 50S subunit (bridge B1b), connecting the 2 subunits; these bridges are implicated in subunit movement. Contacts the tRNAs in the A and P-sites. The polypeptide is Small ribosomal subunit protein uS13 (Neorickettsia sennetsu (strain ATCC VR-367 / Miyayama) (Ehrlichia sennetsu)).